Consider the following 130-residue polypeptide: Small ribosomal subunit protein uS8 (130 aa).

The protein belongs to the universal ribosomal protein uS8 family. In terms of assembly, part of the 30S ribosomal subunit.

Its function is as follows. One of the primary rRNA binding proteins, it binds directly to 16S rRNA central domain where it helps coordinate assembly of the platform of the 30S subunit. This Thermococcus gammatolerans (strain DSM 15229 / JCM 11827 / EJ3) protein is Small ribosomal subunit protein uS8.